We begin with the raw amino-acid sequence, 428 residues long: Serine--tRNA ligase (428 aa).

235 to 237 contributes to the L-serine binding site; that stretch reads TAE. 266–268 is an ATP binding site; the sequence is RSE. Position 289 (Glu-289) interacts with L-serine. 353–356 contributes to the ATP binding site; the sequence is EISS. Ser-389 contacts L-serine.

This sequence belongs to the class-II aminoacyl-tRNA synthetase family. Type-1 seryl-tRNA synthetase subfamily. As to quaternary structure, homodimer. The tRNA molecule binds across the dimer.

The protein resides in the cytoplasm. The enzyme catalyses tRNA(Ser) + L-serine + ATP = L-seryl-tRNA(Ser) + AMP + diphosphate + H(+). It catalyses the reaction tRNA(Sec) + L-serine + ATP = L-seryl-tRNA(Sec) + AMP + diphosphate + H(+). It participates in aminoacyl-tRNA biosynthesis; selenocysteinyl-tRNA(Sec) biosynthesis; L-seryl-tRNA(Sec) from L-serine and tRNA(Sec): step 1/1. Functionally, catalyzes the attachment of serine to tRNA(Ser). Is also able to aminoacylate tRNA(Sec) with serine, to form the misacylated tRNA L-seryl-tRNA(Sec), which will be further converted into selenocysteinyl-tRNA(Sec). This Shewanella oneidensis (strain ATCC 700550 / JCM 31522 / CIP 106686 / LMG 19005 / NCIMB 14063 / MR-1) protein is Serine--tRNA ligase.